Here is a 599-residue protein sequence, read N- to C-terminus: NADH-quinone oxidoreductase subunit C/D (599 aa).

Positions 1–189 are NADH dehydrogenase I subunit C; it reads MTELMTQNSA…DPFVLTKQKE (189 aa). Residues 213–599 are NADH dehydrogenase I subunit D; the sequence is DFMFLNLGPN…IDFVMSDVDR (387 aa).

The protein in the N-terminal section; belongs to the complex I 30 kDa subunit family. It in the C-terminal section; belongs to the complex I 49 kDa subunit family. As to quaternary structure, NDH-1 is composed of 13 different subunits. Subunits NuoB, CD, E, F, and G constitute the peripheral sector of the complex.

Its subcellular location is the cell inner membrane. It catalyses the reaction a quinone + NADH + 5 H(+)(in) = a quinol + NAD(+) + 4 H(+)(out). Its function is as follows. NDH-1 shuttles electrons from NADH, via FMN and iron-sulfur (Fe-S) centers, to quinones in the respiratory chain. The immediate electron acceptor for the enzyme in this species is believed to be ubiquinone. Couples the redox reaction to proton translocation (for every two electrons transferred, four hydrogen ions are translocated across the cytoplasmic membrane), and thus conserves the redox energy in a proton gradient. The sequence is that of NADH-quinone oxidoreductase subunit C/D from Sodalis glossinidius (strain morsitans).